Reading from the N-terminus, the 234-residue chain is Glucosamine-6-phosphate deaminase (234 aa).

The Proton acceptor; for enolization step role is filled by D62. The For ring-opening step role is filled by N128. H130 (proton acceptor; for ring-opening step) is an active-site residue. E135 serves as the catalytic For ring-opening step.

Belongs to the glucosamine/galactosamine-6-phosphate isomerase family. NagB subfamily.

The enzyme catalyses alpha-D-glucosamine 6-phosphate + H2O = beta-D-fructose 6-phosphate + NH4(+). It participates in amino-sugar metabolism; N-acetylneuraminate degradation; D-fructose 6-phosphate from N-acetylneuraminate: step 5/5. Functionally, catalyzes the reversible isomerization-deamination of glucosamine 6-phosphate (GlcN6P) to form fructose 6-phosphate (Fru6P) and ammonium ion. This Streptococcus uberis (strain ATCC BAA-854 / 0140J) protein is Glucosamine-6-phosphate deaminase.